We begin with the raw amino-acid sequence, 207 residues long: Large ribosomal subunit protein uL4 (207 aa).

Residues 45-89 (RQGTHKVKTRSEVRGGGRKPWRQKGTGRARQGSIRSPQWRGGGTV) are disordered. Over residues 60 to 71 (GGRKPWRQKGTG) the composition is skewed to basic residues.

This sequence belongs to the universal ribosomal protein uL4 family. Part of the 50S ribosomal subunit.

One of the primary rRNA binding proteins, this protein initially binds near the 5'-end of the 23S rRNA. It is important during the early stages of 50S assembly. It makes multiple contacts with different domains of the 23S rRNA in the assembled 50S subunit and ribosome. Functionally, forms part of the polypeptide exit tunnel. The protein is Large ribosomal subunit protein uL4 of Bacillus anthracis (strain A0248).